A 129-amino-acid polypeptide reads, in one-letter code: Small ribosomal subunit protein uS11 (129 aa).

Belongs to the universal ribosomal protein uS11 family. As to quaternary structure, part of the 30S ribosomal subunit. Interacts with proteins S7 and S18. Binds to IF-3.

In terms of biological role, located on the platform of the 30S subunit, it bridges several disparate RNA helices of the 16S rRNA. Forms part of the Shine-Dalgarno cleft in the 70S ribosome. This chain is Small ribosomal subunit protein uS11, found in Sinorhizobium medicae (strain WSM419) (Ensifer medicae).